The chain runs to 627 residues: Probable serine/threonine-protein kinase PknB (627 aa).

The 264-residue stretch at 12 to 275 (YRIIKEIGRG…MTDVATSTSL (264 aa)) folds into the Protein kinase domain. Residues 18–26 (IGRGGMANV) and Lys-42 each bind ATP. Asp-136 acts as the Proton acceptor in catalysis. The segment at 304 to 331 (DTKPLIDKKEDNDSQTDEKAASSEVGNK) is disordered. Over residues 307-324 (PLIDKKEDNDSQTDEKAA) the composition is skewed to basic and acidic residues. PASTA domains lie at 361–428 (TPTN…YVST), 430–502 (NEDI…EVSS), and 503–574 (GKQV…TYSV). Residues 464–490 (QTSVPSDSYPAGTIIKQSPKKGSSFDT) form a disordered region. The interval 577-627 (APSSSSTTSESTTTSETSSSTTSSTSSSTTSQPSTDNNNSSKESSTTSSSS) is disordered. Residues 579–627 (SSSSTTSESTTTSETSSSTTSSTSSSTTSQPSTDNNNSSKESSTTSSSS) show a composition bias toward low complexity.

The protein belongs to the protein kinase superfamily. Ser/Thr protein kinase family.

It catalyses the reaction L-seryl-[protein] + ATP = O-phospho-L-seryl-[protein] + ADP + H(+). The enzyme catalyses L-threonyl-[protein] + ATP = O-phospho-L-threonyl-[protein] + ADP + H(+). This is Probable serine/threonine-protein kinase PknB (pknB) from Lactococcus lactis subsp. lactis (strain IL1403) (Streptococcus lactis).